Reading from the N-terminus, the 428-residue chain is MNIAVVGLSHKTAPVEVREKLSIQEAKLEEALTHLRGYPHIEEVAIISTCNRLEIYAVVSDTEKGVVEITQFLSETGHLPLNYLRRYLFTLLHQDAVRHLLRVAAGLESLVLGEGQILAQVKTTHKLGQKYKGIGRLLDRLFKQAITAGKRVRSETNIGTGAVSISSAAVELAQTKAEDLANRRISIIGAGKMARLLVQHLLSKGATDITIVNRSHHRAQELAAQFPQASLNLQLLPEMMQVVASSHIVFTSTAATEPILHRENLTAALDPNHALMLFDISVPRNVASDVHGMEGIESYNVDDLKAVVAQNYESRRQMAQEAEGLLEEEVEAFDLWWRSLETVPTISCLRTKVETIREQELEKALSRLGTEFAEKHQEVIEALTRGIVNKILHEPMVQLRAQQDIEARKRCLESLKMLFDLEIEEQFG.

Residues 49-52, serine 109, 114-116, and glutamine 120 each bind substrate; these read TCNR and EGQ. Catalysis depends on cysteine 50, which acts as the Nucleophile. 189–194 serves as a coordination point for NADP(+); sequence GAGKMA.

The protein belongs to the glutamyl-tRNA reductase family. In terms of assembly, homodimer.

The catalysed reaction is (S)-4-amino-5-oxopentanoate + tRNA(Glu) + NADP(+) = L-glutamyl-tRNA(Glu) + NADPH + H(+). It participates in porphyrin-containing compound metabolism; protoporphyrin-IX biosynthesis; 5-aminolevulinate from L-glutamyl-tRNA(Glu): step 1/2. Its pathway is porphyrin-containing compound metabolism; chlorophyll biosynthesis. Functionally, catalyzes the NADPH-dependent reduction of glutamyl-tRNA(Glu) to glutamate 1-semialdehyde (GSA). This chain is Glutamyl-tRNA reductase, found in Rippkaea orientalis (strain PCC 8801 / RF-1) (Cyanothece sp. (strain PCC 8801)).